The following is a 288-amino-acid chain: MSVVSMKQLLEAGAHFGHRTRRWNPKMQPYIFTARKGIHIIDLQKTLKSIDEAYDFLKNSVMEKKRVLFVGTKKQAQQIVADEARRCGEFFVNNRWLGGLLTNFKTIKSRIDKLEQLTEYVESEEFSKLPKKEQATIRRNLEKLEKNLGGLRGMKKIPDILFIIDPKKEEIAVKEANLLKIPIIATVDTNCDPDVIDYVIPANDDAIRTIMLIVSKMADAIIEGKEGRIETLEESSEVEEEEEEKDEVIDEVDEKLEAEEKYASYAEEVEEVEEEFIPSEIEDEDEKF.

The segment at 267 to 288 is disordered; the sequence is EEVEEVEEEFIPSEIEDEDEKF.

Belongs to the universal ribosomal protein uS2 family.

This Petrotoga mobilis (strain DSM 10674 / SJ95) protein is Small ribosomal subunit protein uS2.